The chain runs to 233 residues: Probable septum site-determining protein MinC (233 aa).

The disordered stretch occupies residues 104–124 (QKMATPEPAPAPAPVVDPNAP).

This sequence belongs to the MinC family. Interacts with MinD and FtsZ.

Functionally, cell division inhibitor that blocks the formation of polar Z ring septums. Rapidly oscillates between the poles of the cell to destabilize FtsZ filaments that have formed before they mature into polar Z rings. Prevents FtsZ polymerization. In Serratia proteamaculans (strain 568), this protein is Probable septum site-determining protein MinC.